The primary structure comprises 653 residues: Zinc finger protein 59 (653 aa).

The KRAB domain occupies 14–86 (VTFRDVAVDF…VNEETGRPSP (73 aa)). C2H2-type zinc fingers lie at residues 172–194 (YECK…QSVH), 200–222 (YECK…QKCH), 256–278 (FACR…GLIH), 284–306 (YECN…QKIH), 312–334 (FQCK…QSSH), 340–362 (FECE…QRIH), 368–390 (FECN…QKTH), 396–418 (LECN…LKTH), 424–446 (FKCK…LTVH), 452–474 (YQCK…ESIH), 480–502 (FQCE…QKSH), 508–530 (FECK…KIVH), 536–558 (FECK…GAVH), 564–586 (YECS…RKIH), 592–614 (FKCQ…QSIH), and 620–642 (FECE…LRIH).

The protein belongs to the krueppel C2H2-type zinc-finger protein family. Expressed predominantly in the testis (at protein level).

The protein resides in the nucleus. Functionally, may have a role during differentiation processes. In Mus musculus (Mouse), this protein is Zinc finger protein 59 (Zfp59).